The primary structure comprises 341 residues: Putative casein kinase I C03C10.2 (341 aa).

The region spanning Trp-50–Leu-326 is the Protein kinase domain. ATP is bound by residues Ile-56 to Ile-64 and Lys-79. Asp-173 functions as the Proton acceptor in the catalytic mechanism.

Belongs to the protein kinase superfamily. CK1 Ser/Thr protein kinase family. Casein kinase I subfamily.

The enzyme catalyses L-seryl-[protein] + ATP = O-phospho-L-seryl-[protein] + ADP + H(+). It catalyses the reaction L-threonyl-[protein] + ATP = O-phospho-L-threonyl-[protein] + ADP + H(+). In Caenorhabditis elegans, this protein is Putative casein kinase I C03C10.2.